The sequence spans 599 residues: DNA-directed RNA polymerase III subunit RPC3 (599 aa).

A disordered region spans residues 335–371; that stretch reads PRLDGLRPRGKGSRSVSPRPQSKRVKTEEGYTKTGDY. Residues 359–371 show a composition bias toward basic and acidic residues; it reads VKTEEGYTKTGDY. The leucine-zipper stretch occupies residues 526-547; the sequence is IYKSLSRCFERVAAERAKLPIL.

The protein belongs to the RNA polymerase beta chain family. In terms of assembly, component of the RNA polymerase III (Pol III) complex consisting of 17 subunits.

The protein resides in the nucleus. Functionally, DNA-dependent RNA polymerase catalyzes the transcription of DNA into RNA using the four ribonucleoside triphosphates as substrates. Specific core component of RNA polymerase III which synthesizes small RNAs, such as 5S rRNA and tRNAs. The polypeptide is DNA-directed RNA polymerase III subunit RPC3 (RPC82) (Yarrowia lipolytica (strain CLIB 122 / E 150) (Yeast)).